We begin with the raw amino-acid sequence, 536 residues long: Probable 1,4-beta-D-glucan cellobiohydrolase B (536 aa).

An N-terminal signal peptide occupies residues 1–21 (MSSFQVYRAALLLSILATANA). Residues 22–458 (QQVGTYTTET…SNIKFGPIGS (437 aa)) are catalytic. Glu233 serves as the catalytic Nucleophile. Glu238 serves as the catalytic Proton donor. N-linked (GlcNAc...) asparagine glycosylation is found at Asn351 and Asn414. Positions 459-500 (TYSSGSSSGSGSSSSSSSTTTKATSTTLKTTSTTSSGSSSTS) are ser/Thr-rich linker. The tract at residues 464-499 (SSSGSGSSSSSSSTTTKATSTTLKTTSTTSSGSSST) is disordered. The CBM1 domain maps to 500-536 (SAAQAYGQCGGQGWTGPTTCVSGYTCTYENAYYSQCL). 2 disulfide bridges follow: Cys508–Cys525 and Cys519–Cys535.

The protein belongs to the glycosyl hydrolase 7 (cellulase C) family.

Its subcellular location is the secreted. The catalysed reaction is Hydrolysis of (1-&gt;4)-beta-D-glucosidic linkages in cellulose and cellotetraose, releasing cellobiose from the non-reducing ends of the chains.. The biological conversion of cellulose to glucose generally requires three types of hydrolytic enzymes: (1) Endoglucanases which cut internal beta-1,4-glucosidic bonds; (2) Exocellobiohydrolases that cut the disaccharide cellobiose from the non-reducing end of the cellulose polymer chain; (3) Beta-1,4-glucosidases which hydrolyze the cellobiose and other short cello-oligosaccharides to glucose. The chain is Probable 1,4-beta-D-glucan cellobiohydrolase B (cbhB) from Aspergillus niger (strain ATCC MYA-4892 / CBS 513.88 / FGSC A1513).